The chain runs to 383 residues: Methenyltetrahydrofolate synthase domain-containing protein (383 aa).

The segment at 249–301 (AGKDVTLQGEHQHLPEPGCQQTVPLSVGRRPPDTPGPETNSMEAAPGSPPGEG) is disordered. One can recognise an RRM domain in the interval 306–379 (ADVYVGNLPG…DTLRVALARQ (74 aa)).

The chain is Methenyltetrahydrofolate synthase domain-containing protein (MTHFSD) from Homo sapiens (Human).